The primary structure comprises 452 residues: Xaa-Pro dipeptidase 1 (452 aa).

Positions 247, 258, 338, 383, and 422 each coordinate Mn(2+).

It belongs to the peptidase M24B family. Bacterial-type prolidase subfamily. Mn(2+) serves as cofactor.

The catalysed reaction is Xaa-L-Pro dipeptide + H2O = an L-alpha-amino acid + L-proline. Functionally, splits dipeptides with a prolyl residue in the C-terminal position. This Idiomarina loihiensis (strain ATCC BAA-735 / DSM 15497 / L2-TR) protein is Xaa-Pro dipeptidase 1.